Consider the following 256-residue polypeptide: Pro-thyrotropin-releasing hormone (256 aa).

Residues 1 to 24 (MQGPWLMMALALIFVLTGIPKSCA) form the signal peptide. 2 disordered regions span residues 76 to 128 (RQHP…EGDS) and 151 to 215 (VKRQ…HPCG). Residues proline 79, proline 111, proline 156, and proline 174 each carry the proline amide modification. A compositionally biased stretch (basic residues) spans 104–113 (RPHKRQHPGR). Positions 177–188 (RFIDPELQRSWE) are enriched in basic and acidic residues. A Proline amide modification is found at proline 205.

It belongs to the TRH family. Specifically expressed in hypothalamus and testis.

Its subcellular location is the secreted. Functionally, functions as a regulator of the biosynthesis of TSH in the anterior pituitary gland and as a neurotransmitter/ neuromodulator in the central and peripheral nervous systems. The chain is Pro-thyrotropin-releasing hormone (Trh) from Mus musculus (Mouse).